The chain runs to 102 residues: Putative defensin-like protein 152 (102 aa).

The N-terminal stretch at 1–29 (MKKASQLSTTILTIFIVLAIGMMVKGTVG) is a signal peptide. 4 disulfides stabilise this stretch: Cys34–Cys93, Cys51–Cys71, Cys56–Cys87, and Cys60–Cys89.

Belongs to the DEFL family.

It localises to the secreted. This is Putative defensin-like protein 152 (LCR11) from Arabidopsis thaliana (Mouse-ear cress).